A 466-amino-acid polypeptide reads, in one-letter code: 3-isopropylmalate dehydratase large subunit (466 aa).

[4Fe-4S] cluster contacts are provided by Cys347, Cys407, and Cys410.

Belongs to the aconitase/IPM isomerase family. LeuC type 1 subfamily. As to quaternary structure, heterodimer of LeuC and LeuD. [4Fe-4S] cluster serves as cofactor.

It carries out the reaction (2R,3S)-3-isopropylmalate = (2S)-2-isopropylmalate. The protein operates within amino-acid biosynthesis; L-leucine biosynthesis; L-leucine from 3-methyl-2-oxobutanoate: step 2/4. Catalyzes the isomerization between 2-isopropylmalate and 3-isopropylmalate, via the formation of 2-isopropylmaleate. The sequence is that of 3-isopropylmalate dehydratase large subunit from Shewanella woodyi (strain ATCC 51908 / MS32).